Consider the following 576-residue polypeptide: Low-affinity glucose transporter HXT4 (576 aa).

A disordered region spans residues 1 to 56 (MSEEAAYQEDTAVQNTPADALSPVESDSNSALSTPSNKAERDDMKDFDENHEESNN). Residues 1–66 (MSEEAAYQED…YVEIPKKPAS (66 aa)) lie on the Cytoplasmic side of the membrane. Polar residues predominate over residues 25–37 (ESDSNSALSTPSN). A compositionally biased stretch (basic and acidic residues) spans 38 to 54 (KAERDDMKDFDENHEES). A Glycyl lysine isopeptide (Lys-Gly) (interchain with G-Cter in ubiquitin) cross-link involves residue Lys45. The helical transmembrane segment at 67–87 (AYVTVSICCLMVAFGGFVFGW) threads the bilayer. Residues 88 to 122 (DTGTISGFVAQTDFIRRFGMKHHDGTYYLSKVRTG) lie on the Extracellular side of the membrane. A helical transmembrane segment spans residues 123 to 143 (LMVSIINIGCAIGGIILAKLG). Residues 144–149 (DMYGRK) lie on the Cytoplasmic side of the membrane. The helical transmembrane segment at 150–170 (MGLIVVVVIYIIGIIIQIASI) threads the bilayer. The Extracellular segment spans residues 171–180 (NKWYQYFIGR). A helical transmembrane segment spans residues 181–201 (IISGLGVGGIAVLSPMLISEV). The Cytoplasmic portion of the chain corresponds to 202–207 (SPKHIR). The chain crosses the membrane as a helical span at residues 208–228 (GTLVSCYQLMITLGIFLGYCT). The Extracellular portion of the chain corresponds to 229–242 (NYGTKTYTNSVQWR). The helical transmembrane segment at 243–263 (VPLGLGFAWALFMIGGMTFVP) threads the bilayer. Residues 264 to 346 (ESPRYLVEVG…IQSLQQLTGD (83 aa)) are Cytoplasmic-facing. Residues 347–363 (NYFFYYGTTVFTAVGLS) traverse the membrane as a helical segment. At 364–369 (DSFETS) the chain is on the extracellular side. The chain crosses the membrane as a helical span at residues 370 to 387 (IVLGIVNFASTFVGIFLV). At 388–394 (ERYGRRR) the chain is on the cytoplasmic side. The helical transmembrane segment at 395–415 (CLLWGAASMTACMVVFASVGV) threads the bilayer. Over 416–437 (TRLWPNGKKNGSSKGAGNCMIV) the chain is Extracellular. N-linked (GlcNAc...) asparagine glycosylation is present at Asn425. The helical transmembrane segment at 438-458 (FTCFYLFCFATTWAPIPFVVN) threads the bilayer. Residues 459–475 (SETFPLRVKSKCMAIAQ) are Cytoplasmic-facing. Residues 476–496 (ACNWIWGFLIGFFTPFISNAI) form a helical membrane-spanning segment. Residue Asp497 is a topological domain, extracellular. Residues 498-518 (FYYGYVFMGCLVFSYFYVFFF) traverse the membrane as a helical segment. At 519–576 (VPETKGLTLEEVNTLWEEGVLPWKSPSWVPPNKRGTDYNADDLMHDDQPFYKKMFGKK) the chain is on the cytoplasmic side.

Belongs to the major facilitator superfamily. Sugar transporter (TC 2.A.1.1) family.

It localises to the cell membrane. Its activity is regulated as follows. Xylose uptake is strongly inhibited by glucose. Functionally, low-affinity glucose transporter. Can also transport xylose. The polypeptide is Low-affinity glucose transporter HXT4 (HXT4) (Saccharomyces cerevisiae (strain JAY291) (Baker's yeast)).